The chain runs to 184 residues: Thiosulfate dehydrogenase [quinone] large subunit (184 aa).

4 consecutive transmembrane segments (helical) span residues 21-38 (LFPV…GGLR), 86-106 (FLTV…IGLL), 109-129 (LAAL…WLGS), and 137-157 (IGAL…GRVW).

In terms of assembly, heterodimer of a large and a small subunit in a 2:2 stoichiometry. TQO may associate with the terminal oxidase formed by doxBCE.

It localises to the cell membrane. It carries out the reaction 6-decylubiquinone + 2 thiosulfate = 6-decylubiquinol + tetrathionate. With respect to regulation, inhibited by sulfite, metabisulfite and dithonite. TQO plays a role in sulfur oxidation and is proposed to couple sulfur oxidation to dioxygen reduction; caldariellaquinone or sulfolobus quinone seem to serve to transfer electrons to the electron transport chain terminal oxidase formed by DoxBCE. The protein is Thiosulfate dehydrogenase [quinone] large subunit (doxD) of Acidianus ambivalens (Desulfurolobus ambivalens).